We begin with the raw amino-acid sequence, 259 residues long: Deoxyribose-phosphate aldolase (259 aa).

The active-site Proton donor/acceptor is Asp102. Residue Lys167 is the Schiff-base intermediate with acetaldehyde of the active site. Residue Lys201 is the Proton donor/acceptor of the active site.

This sequence belongs to the DeoC/FbaB aldolase family. DeoC type 2 subfamily.

It is found in the cytoplasm. It catalyses the reaction 2-deoxy-D-ribose 5-phosphate = D-glyceraldehyde 3-phosphate + acetaldehyde. The protein operates within carbohydrate degradation; 2-deoxy-D-ribose 1-phosphate degradation; D-glyceraldehyde 3-phosphate and acetaldehyde from 2-deoxy-alpha-D-ribose 1-phosphate: step 2/2. Functionally, catalyzes a reversible aldol reaction between acetaldehyde and D-glyceraldehyde 3-phosphate to generate 2-deoxy-D-ribose 5-phosphate. This is Deoxyribose-phosphate aldolase from Escherichia coli O1:K1 / APEC.